A 140-amino-acid polypeptide reads, in one-letter code: FlaA locus uncharacterized protein YlxG (140 aa).

A disordered region spans residues 1–21 (MTSISSEYKLPEKTNTVSTNN).

It belongs to the FlgD family.

The protein is FlaA locus uncharacterized protein YlxG (ylxG) of Bacillus subtilis (strain 168).